A 162-amino-acid polypeptide reads, in one-letter code: NADH-quinone oxidoreductase subunit I (162 aa).

2 consecutive 4Fe-4S ferredoxin-type domains span residues R54 to E83 and T93 to I122. Positions 63, 66, 69, 73, 102, 105, 108, and 112 each coordinate [4Fe-4S] cluster.

It belongs to the complex I 23 kDa subunit family. As to quaternary structure, NDH-1 is composed of 14 different subunits. Subunits NuoA, H, J, K, L, M, N constitute the membrane sector of the complex. The cofactor is [4Fe-4S] cluster.

It localises to the cell inner membrane. It catalyses the reaction a quinone + NADH + 5 H(+)(in) = a quinol + NAD(+) + 4 H(+)(out). Its function is as follows. NDH-1 shuttles electrons from NADH, via FMN and iron-sulfur (Fe-S) centers, to quinones in the respiratory chain. The immediate electron acceptor for the enzyme in this species is believed to be ubiquinone. Couples the redox reaction to proton translocation (for every two electrons transferred, four hydrogen ions are translocated across the cytoplasmic membrane), and thus conserves the redox energy in a proton gradient. The polypeptide is NADH-quinone oxidoreductase subunit I (Burkholderia cenocepacia (strain HI2424)).